Here is a 313-residue protein sequence, read N- to C-terminus: tRNA dimethylallyltransferase (313 aa).

Position 11–18 (11–18) interacts with ATP; that stretch reads GPTASGKT. 13 to 18 lines the substrate pocket; sequence TASGKT. Interaction with substrate tRNA stretches follow at residues 36 to 39, 160 to 164, and 241 to 246; these read DSAL, QRINR, and RCVGYR.

This sequence belongs to the IPP transferase family. In terms of assembly, monomer. Requires Mg(2+) as cofactor.

It catalyses the reaction adenosine(37) in tRNA + dimethylallyl diphosphate = N(6)-dimethylallyladenosine(37) in tRNA + diphosphate. Functionally, catalyzes the transfer of a dimethylallyl group onto the adenine at position 37 in tRNAs that read codons beginning with uridine, leading to the formation of N6-(dimethylallyl)adenosine (i(6)A). The polypeptide is tRNA dimethylallyltransferase (Haemophilus ducreyi (strain 35000HP / ATCC 700724)).